We begin with the raw amino-acid sequence, 217 residues long: Octanoyltransferase (217 aa).

One can recognise a BPL/LPL catalytic domain in the interval 32–207; the sequence is DDSADEIWLV…HMIKKLNATQ (176 aa). Substrate-binding positions include 71–78, 138–140, and 151–153; these read RGGQVTYH, SLG, and GLA. Catalysis depends on Cys-169, which acts as the Acyl-thioester intermediate.

The protein belongs to the LipB family.

The protein resides in the cytoplasm. It carries out the reaction octanoyl-[ACP] + L-lysyl-[protein] = N(6)-octanoyl-L-lysyl-[protein] + holo-[ACP] + H(+). The protein operates within protein modification; protein lipoylation via endogenous pathway; protein N(6)-(lipoyl)lysine from octanoyl-[acyl-carrier-protein]: step 1/2. In terms of biological role, catalyzes the transfer of endogenously produced octanoic acid from octanoyl-acyl-carrier-protein onto the lipoyl domains of lipoate-dependent enzymes. Lipoyl-ACP can also act as a substrate although octanoyl-ACP is likely to be the physiological substrate. In Pseudoalteromonas translucida (strain TAC 125), this protein is Octanoyltransferase.